Here is a 282-residue protein sequence, read N- to C-terminus: Phosphate transport system permease protein PstA (282 aa).

The next 6 membrane-spanning stretches (helical) occupy residues 22–42, 71–91, 111–131, 136–156, 198–218, and 254–274; these read LSYI…FTLI, LIGS…IGVL, FLND…VYSL, IEHF…IPIV, ILTG…PLLF, and NLAW…NIFT. Positions 71 to 274 constitute an ABC transmembrane type-1 domain; it reads LIGSFFIVGA…LFVLCLNIFT (204 aa).

The protein belongs to the binding-protein-dependent transport system permease family. CysTW subfamily.

The protein localises to the cell inner membrane. In terms of biological role, part of the binding-protein-dependent transport system for phosphate; probably responsible for the translocation of the substrate across the membrane. This is Phosphate transport system permease protein PstA (pstA) from Haemophilus influenzae (strain ATCC 51907 / DSM 11121 / KW20 / Rd).